The primary structure comprises 245 residues: Carbohydrate deacetylase (245 aa).

Positions 59 and 125 each coordinate Mg(2+).

It belongs to the YdjC deacetylase family. As to quaternary structure, homodimer. The cofactor is Mg(2+).

Probably catalyzes the deacetylation of acetylated carbohydrates an important step in the degradation of oligosaccharides. The protein is Carbohydrate deacetylase of Listeria monocytogenes serotype 4b (strain CLIP80459).